The chain runs to 625 residues: Phosphomethylpyrimidine synthase (625 aa).

Residues N230, M259, Y288, H324, 344 to 346, 385 to 388, and E424 each bind substrate; these read SRG and DGLR. H428 serves as a coordination point for Zn(2+). Y451 is a substrate binding site. H492 is a binding site for Zn(2+). Positions 572, 575, and 580 each coordinate [4Fe-4S] cluster.

This sequence belongs to the ThiC family. Homodimer. Requires [4Fe-4S] cluster as cofactor.

It catalyses the reaction 5-amino-1-(5-phospho-beta-D-ribosyl)imidazole + S-adenosyl-L-methionine = 4-amino-2-methyl-5-(phosphooxymethyl)pyrimidine + CO + 5'-deoxyadenosine + formate + L-methionine + 3 H(+). The protein operates within cofactor biosynthesis; thiamine diphosphate biosynthesis. Catalyzes the synthesis of the hydroxymethylpyrimidine phosphate (HMP-P) moiety of thiamine from aminoimidazole ribotide (AIR) in a radical S-adenosyl-L-methionine (SAM)-dependent reaction. This is Phosphomethylpyrimidine synthase from Xanthomonas oryzae pv. oryzae (strain MAFF 311018).